Consider the following 482-residue polypeptide: MERQPKSLCDATQLLETANIISDTVQTIIAEWSAEAKAPQGSGKQNAPMLPSRELFDAQRTILAAVGKLTELVSDPSARILEVATQFQESRSLYIAAERRIPDLLAAGDEGGVHIDQISQKAKIEPRKLARILRYLCSIGIFKQTGPDTFANNRISAALVSNEPLRAYVQLVNSEGFTASDRLPHTLLHPDTGPSYDVAKTAWQNAVCTKKTRWEWLEERVAPEQLLESGGHYPGIPSLVMGLPPREDDGLVARPELEIMGLSMVGGGRVFGTAHVYDFPWASLGDALVVDVGGGVGGFPLQLSKVYPQLRFIVQDRGPVVKQGLEKVWPRENPEALHQGRVQFVEHSFFDTNPTEGADIYFLRYVLHDWSDDYCVRILAAIRSSMAAHSRLLICDQVMNTTIGDPDLDSAPSPLPANYGYHTRFSHSRDITMMSCINGIERTPAEFKGLLQAAGLKLKKIWDCRSQVSLIEAVLPEMNGFR.

Residues 293 to 294 (GG), Asp-316, 348 to 349 (SF), and Arg-364 contribute to the S-adenosyl-L-methionine site. His-368 functions as the Proton acceptor in the catalytic mechanism.

The protein belongs to the class I-like SAM-binding methyltransferase superfamily. Cation-independent O-methyltransferase family. Specifically expressed in conidia.

It functions in the pathway secondary metabolite biosynthesis. Its function is as follows. O-methyltransferase; part of the gene cluster that mediates the biosynthesis of trypacidin, a mycotoxin with antiprotozoal activity and that plays a role in the infection process. The pathway begins with the synthesis of atrochrysone thioester by the polyketide synthase (PKS) tpcC. The atrochrysone carboxyl ACP thioesterase tpcB then breaks the thioester bond and releases the atrochrysone carboxylic acid from tpcC. The decarboxylase tpcK converts atrochrysone carboxylic acid to atrochrysone which is further reduced into emodin anthrone. The next step is performed by the emodin anthrone oxygenase tpcL that catalyzes the oxidation of emodinanthrone to emodin. Emodin O-methyltransferase encoded by tpcA catalyzes methylation of the 8-hydroxy group of emodin to form questin. Ring cleavage of questin by questin oxidase tpcI leads to desmethylsulochrin via several intermediates including questin epoxide. Another methylation step catalyzed by tpcM leads to the formation of sulochrin which is further converted to monomethylsulfochrin by tpcH. Finally, the tpcJ catalyzes the conversion of monomethylsulfochrin to trypacidin. Trypacidin is toxic for human pulmonary and bronchial epithelial cells by initiating the intracellular formation of nitric oxide (NO) and hydrogen peroxide (H(2)O(2)), thus triggering host necrotic cell death. The trypacidin pathway is also able to produce endocrocin via a distinct route from the endocrocin Enc pathway. The sequence is that of O-methyltransferase tpcA from Aspergillus fumigatus (strain ATCC MYA-4609 / CBS 101355 / FGSC A1100 / Af293) (Neosartorya fumigata).